Consider the following 149-residue polypeptide: 3-hydroxyacyl-[acyl-carrier-protein] dehydratase FabZ (149 aa).

Residue His53 is part of the active site.

Belongs to the thioester dehydratase family. FabZ subfamily.

Its subcellular location is the cytoplasm. The catalysed reaction is a (3R)-hydroxyacyl-[ACP] = a (2E)-enoyl-[ACP] + H2O. In terms of biological role, involved in unsaturated fatty acids biosynthesis. Catalyzes the dehydration of short chain beta-hydroxyacyl-ACPs and long chain saturated and unsaturated beta-hydroxyacyl-ACPs. The polypeptide is 3-hydroxyacyl-[acyl-carrier-protein] dehydratase FabZ (Neisseria meningitidis serogroup C / serotype 2a (strain ATCC 700532 / DSM 15464 / FAM18)).